We begin with the raw amino-acid sequence, 100 residues long: NADH-quinone oxidoreductase subunit K (100 aa).

Helical transmembrane passes span 2–22 (IPLQHGLILAAILFVLGLTGV), 28–48 (LLFMLIGLEIMINAAALAFVV), and 60–80 (VMFILAISLAAAEASIGLALL).

This sequence belongs to the complex I subunit 4L family. In terms of assembly, NDH-1 is composed of 13 different subunits. Subunits NuoA, H, J, K, L, M, N constitute the membrane sector of the complex.

It is found in the cell inner membrane. It carries out the reaction a quinone + NADH + 5 H(+)(in) = a quinol + NAD(+) + 4 H(+)(out). In terms of biological role, NDH-1 shuttles electrons from NADH, via FMN and iron-sulfur (Fe-S) centers, to quinones in the respiratory chain. The immediate electron acceptor for the enzyme in this species is believed to be ubiquinone. Couples the redox reaction to proton translocation (for every two electrons transferred, four hydrogen ions are translocated across the cytoplasmic membrane), and thus conserves the redox energy in a proton gradient. The sequence is that of NADH-quinone oxidoreductase subunit K from Erwinia tasmaniensis (strain DSM 17950 / CFBP 7177 / CIP 109463 / NCPPB 4357 / Et1/99).